Reading from the N-terminus, the 165-residue chain is Lipoprotein signal peptidase (165 aa).

Transmembrane regions (helical) follow at residues 64–84 (LGRW…GAWM) and 88–108 (GSRL…GNAV). Active-site residues include D118 and D136. Residues 128–148 (SWYVFNVADAGIVAGVAGLLV) form a helical membrane-spanning segment.

It belongs to the peptidase A8 family.

The protein resides in the cell inner membrane. It carries out the reaction Release of signal peptides from bacterial membrane prolipoproteins. Hydrolyzes -Xaa-Yaa-Zaa-|-(S,diacylglyceryl)Cys-, in which Xaa is hydrophobic (preferably Leu), and Yaa (Ala or Ser) and Zaa (Gly or Ala) have small, neutral side chains.. Its pathway is protein modification; lipoprotein biosynthesis (signal peptide cleavage). Functionally, this protein specifically catalyzes the removal of signal peptides from prolipoproteins. This is Lipoprotein signal peptidase from Methylobacterium sp. (strain 4-46).